Reading from the N-terminus, the 213-residue chain is Large ribosomal subunit protein bL25 (213 aa).

Belongs to the bacterial ribosomal protein bL25 family. CTC subfamily. Part of the 50S ribosomal subunit; part of the 5S rRNA/L5/L18/L25 subcomplex. Contacts the 5S rRNA. Binds to the 5S rRNA independently of L5 and L18.

Functionally, this is one of the proteins that binds to the 5S RNA in the ribosome where it forms part of the central protuberance. This is Large ribosomal subunit protein bL25 from Mesorhizobium japonicum (strain LMG 29417 / CECT 9101 / MAFF 303099) (Mesorhizobium loti (strain MAFF 303099)).